The following is a 147-amino-acid chain: Submaxillary gland androgen-regulated protein 3A (147 aa).

Residues 1 to 22 (MKPLNLVLGLCILVGCFLSCEC) form the signal peptide. The segment at 27-128 (RRHDPRGPFP…ISITTPTARD (102 aa)) is disordered. Residues 33 to 105 (GPFPPPPPPH…PTPSIPPTGP (73 aa)) show a composition bias toward pro residues. Tandem repeats lie at residues 43–54 (GPGIGRPHPPPF), 55–66 (GPGIGRPPPPPF), and 67–78 (GPGIGRPPPPPP). Residues 43–78 (GPGIGRPHPPPFGPGIGRPPPPPFGPGIGRPPPPPP) are 3 X 12 AA tandem repeats of G-P-G-I-G-R-P-[HP]-P-P-P-[PF]. Residues 108–127 (TVQATTMPAASISITTPTAR) are compositionally biased toward polar residues.

Belongs to the PROL1/PROL3 family. In terms of tissue distribution, secreted into saliva by submaxillary gland.

It localises to the secreted. Its function is as follows. May play a role in protection or detoxification. The chain is Submaxillary gland androgen-regulated protein 3A (Smr3a) from Mus musculus (Mouse).